A 124-amino-acid polypeptide reads, in one-letter code: UPF0231 protein Shewmr4_0656 (124 aa).

Belongs to the UPF0231 family.

The polypeptide is UPF0231 protein Shewmr4_0656 (Shewanella sp. (strain MR-4)).